The primary structure comprises 365 residues: tRNA 2-selenouridine synthase (365 aa).

The Rhodanese domain occupies 15-138 (FVNDHPIMDA…MRQFLIETID (124 aa)). C98 functions as the S-selanylcysteine intermediate in the catalytic mechanism.

Belongs to the SelU family. Monomer.

It carries out the reaction 5-methylaminomethyl-2-thiouridine(34) in tRNA + selenophosphate + (2E)-geranyl diphosphate + H2O + H(+) = 5-methylaminomethyl-2-selenouridine(34) in tRNA + (2E)-thiogeraniol + phosphate + diphosphate. The enzyme catalyses 5-methylaminomethyl-2-thiouridine(34) in tRNA + (2E)-geranyl diphosphate = 5-methylaminomethyl-S-(2E)-geranyl-thiouridine(34) in tRNA + diphosphate. It catalyses the reaction 5-methylaminomethyl-S-(2E)-geranyl-thiouridine(34) in tRNA + selenophosphate + H(+) = 5-methylaminomethyl-2-(Se-phospho)selenouridine(34) in tRNA + (2E)-thiogeraniol. The catalysed reaction is 5-methylaminomethyl-2-(Se-phospho)selenouridine(34) in tRNA + H2O = 5-methylaminomethyl-2-selenouridine(34) in tRNA + phosphate. Its function is as follows. Involved in the post-transcriptional modification of the uridine at the wobble position (U34) of tRNA(Lys), tRNA(Glu) and tRNA(Gln). Catalyzes the conversion of 2-thiouridine (S2U-RNA) to 2-selenouridine (Se2U-RNA). Acts in a two-step process involving geranylation of 2-thiouridine (S2U) to S-geranyl-2-thiouridine (geS2U) and subsequent selenation of the latter derivative to 2-selenouridine (Se2U) in the tRNA chain. This is tRNA 2-selenouridine synthase from Shewanella halifaxensis (strain HAW-EB4).